Reading from the N-terminus, the 760-residue chain is H(+)/Cl(-) exchange transporter 4 (760 aa).

At 1–67 the chain is on the cytoplasmic side; it reads MVNAGAMSGS…WEFIKSLLDA (67 aa). The required for localization in the endoplasmic reticulum stretch occupies residues 14–63; it reads MDFLDEPFPDVGTYEDFHTIDWLREKSRDTDRHRKITSKSKESIWEFIKS. 2 helical membrane passes run 68-105 and 151-174; these read WSGW…VCLS and LNYL…VRVF. The short motif at 180 to 184 is the Selectivity filter part_1 element; that stretch reads GSGIP. S181 contributes to the chloride binding site. Residues 183 to 190 constitute an intramembrane region (helical); that stretch reads IPEIKTIL. Helical transmembrane passes span 200-218 and 224-243; these read GKWT…VSSG and EGPL…SLFS. The short motif at 222–226 is the Selectivity filter part_2 element; it reads GKEGP. 2 intramembrane regions (helical) span residues 255–267 and 271–279; these read VLSA…VSVA and PIGGVLFSL. 5 consecutive transmembrane segments (helical) span residues 291 to 309, 333 to 358, 365 to 385, 442 to 462, and 467 to 486; these read LWRS…RSIN, FPFI…AWCR, LGKY…IIAY, MWQL…TFGM, and GLFI…VGIG. A Selectivity filter part_3 motif is present at residues 467-471; the sequence is GLFIP. F469 contributes to the chloride binding site. 2 consecutive intramembrane regions (helical) follow at residues 514–528 and 532–543; these read GLYA…LGGV and TVSLVVIMFELT. Positions 544-547 form an intramembrane region, note=Loop between two helices; the sequence is GGLE. Residues 548–566 traverse the membrane as a helical segment; sequence YIVPLMAAAVTSKWVADAF. Residues 567–760 are Cytoplasmic-facing; sequence GKEGIYEAHI…NQDPESIMFN (194 aa). Y572 serves as a coordination point for chloride. A CBS 1 domain is found at 600–666; sequence MRPRRGEPPL…AIKNARQRQE (67 aa). ATP contacts are provided by residues S610 and 631 to 633; that span reads YNG. The interval 667 to 696 is required for localization in the endoplasmic reticulum; it reads GIVSNSIMYFTEEPPELPANSPHPLKLRRI. The CBS 2 domain occupies 697-755; sequence LNLSPFTVTDHTPMETVVDIFRKLGLRQCLVTRSGRLLGIITKKDVLRHMAQMANQDPE. 738–741 lines the ATP pocket; it reads TKKD.

This sequence belongs to the chloride channel (TC 2.A.49) family. ClC-4/CLCN4 subfamily. As to quaternary structure, monomer. Forms heterodimers with CLCN3. In terms of tissue distribution, abundant in skeletal muscle and also detectable in brain and heart.

It is found in the early endosome membrane. The protein localises to the late endosome membrane. The protein resides in the endoplasmic reticulum membrane. Its subcellular location is the lysosome membrane. It localises to the recycling endosome membrane. Strongly outwardly rectifying, electrogenic H(+)/Cl(-)exchanger which mediates the exchange of chloride ions against protons. The CLC channel family contains both chloride channels and proton-coupled anion transporters that exchange chloride or another anion for protons. The presence of conserved gating glutamate residues is typical for family members that function as antiporters. The polypeptide is H(+)/Cl(-) exchange transporter 4 (CLCN4) (Homo sapiens (Human)).